The following is a 519-amino-acid chain: MIOREX complex component 12 (519 aa).

The transit peptide at 1-35 (MLRSLHSAATLSNKRFYSLISHSNRKNIIKKLLRH) directs the protein to the mitochondrion.

As to quaternary structure, associates with the mitochondrial ribosome.

The protein localises to the mitochondrion. Its function is as follows. Component of MIOREX complexes, large expressome-like assemblies of ribosomes with factors involved in all the steps of post-transcriptional gene expression. This is MIOREX complex component 12 from Saccharomyces cerevisiae (strain ATCC 204508 / S288c) (Baker's yeast).